Reading from the N-terminus, the 211-residue chain is N-(5'-phosphoribosyl)anthranilate isomerase (211 aa).

This sequence belongs to the TrpF family.

The catalysed reaction is N-(5-phospho-beta-D-ribosyl)anthranilate = 1-(2-carboxyphenylamino)-1-deoxy-D-ribulose 5-phosphate. It participates in amino-acid biosynthesis; L-tryptophan biosynthesis; L-tryptophan from chorismate: step 3/5. The sequence is that of N-(5'-phosphoribosyl)anthranilate isomerase from Hyphomonas neptunium (strain ATCC 15444).